We begin with the raw amino-acid sequence, 274 residues long: NAD kinase (274 aa).

Asp-60 acts as the Proton acceptor in catalysis. NAD(+)-binding positions include Asp-60–Gly-61, Lys-65, Asn-127–Glu-128, and Arg-152.

Belongs to the NAD kinase family. A divalent metal cation serves as cofactor.

The protein resides in the cytoplasm. The catalysed reaction is NAD(+) + ATP = ADP + NADP(+) + H(+). Involved in the regulation of the intracellular balance of NAD and NADP, and is a key enzyme in the biosynthesis of NADP. Catalyzes specifically the phosphorylation on 2'-hydroxyl of the adenosine moiety of NAD to yield NADP. This Mycoplasmoides gallisepticum (strain R(low / passage 15 / clone 2)) (Mycoplasma gallisepticum) protein is NAD kinase.